The primary structure comprises 475 residues: Capsid scaffolding protein (475 aa).

Catalysis depends on charge relay system residues His-45, Ser-113, and His-132. An interaction with pAP region spans residues Asp-254–Asp-273. A Nuclear localization signal motif is present at residues Arg-327–Arg-333. Residues Gln-426–Ala-454 are disordered. The interaction with major capsid protein stretch occupies residues Ser-455 to Lys-475.

Belongs to the herpesviridae capsid scaffolding protein family. In terms of assembly, homomultimer. Interacts with major capsid protein. As to quaternary structure, exists in a monomer-dimer equilibrium with the dimer being the active species. Capsid scaffolding protein is cleaved by assemblin after formation of the spherical procapsid. As a result, the capsid obtains its mature, icosahedral shape. Cleavages occur at two or more sites: release (R-site) and maturation (M-site).

It localises to the host cytoplasm. Its subcellular location is the host nucleus. The enzyme catalyses Cleaves -Ala-|-Ser- and -Ala-|-Ala- bonds in the scaffold protein.. Acts as a scaffold protein by binding major capsid protein in the cytoplasm, inducing the nuclear localization of both proteins. Multimerizes in the nucleus such as major capsid protein forms the icosahedral T=16 capsid. Autocatalytic cleavage releases the assembly protein, and subsequently abolishes interaction with major capsid protein. Cleavages products are evicted from the capsid before or during DNA packaging. In terms of biological role, protease that plays an essential role in virion assembly within the nucleus. Catalyzes the cleavage of the assembly protein after formation of the spherical procapsid. By that cleavage, the capsid matures and gains its icosahedral shape. The cleavage sites seem to include -Ala-Ser-, -Ala-Ala-, as well as Ala-Thr bonds. Assemblin and cleavages products are evicted from the capsid before or during DNA packaging. Functionally, plays a major role in capsid assembly. Acts as a scaffold protein by binding major capsid protein. Multimerizes in the nucleus such as major capsid protein forms the icosahedral T=16 capsid. Cleaved by assemblin after capsid completion. The cleavages products are evicted from the capsid before or during DNA packaging. This is Capsid scaffolding protein (17) from Saimiriine herpesvirus 2 (strain 11) (SaHV-2).